Here is a 78-residue protein sequence, read N- to C-terminus: Putative antitoxin PF1222 (78 aa).

It belongs to the UPF0330 family.

Possibly the antitoxin component of a type II toxin-antitoxin (TA) system. This Pyrococcus furiosus (strain ATCC 43587 / DSM 3638 / JCM 8422 / Vc1) protein is Putative antitoxin PF1222.